A 211-amino-acid chain; its full sequence is Metalloproteinase inhibitor 3 (211 aa).

The N-terminal stretch at 1-23 (MTPWLGLVVLLSCWSLGHWGAEA) is a signal peptide. Cys24 contributes to the Zn(2+) binding site. Involved in metalloproteinase-binding stretches follow at residues 24-27 (CTCS) and 88-89 (ES). Intrachain disulfides connect Cys24–Cys91, Cys26–Cys118, Cys36–Cys143, Cys145–Cys192, Cys150–Cys155, and Cys163–Cys184. Residues 24-143 (CTCSPSHPQD…GLNYRYHLGC (120 aa)) enclose the NTR domain. The segment at 105-188 (TGRVYEGKMY…SKHYACIRQK (84 aa)) is mediates interaction with EFEMP1.

Belongs to the protease inhibitor I35 (TIMP) family. As to quaternary structure, interacts with EFEMP1. Interacts with KDR. Highest levels are found in kidney, lung and brain followed by ovary and uterus. Low levels are found in bone.

It is found in the secreted. The protein localises to the extracellular space. The protein resides in the extracellular matrix. Functionally, mediates a variety of processes including matrix regulation and turnover, inflammation, and angiogenesis, through reversible inhibition of zinc protease superfamily enzymes, primarily matrix metalloproteinases (MMPs). Regulates extracellular matrix (ECM) remodeling through inhibition of matrix metalloproteinases (MMP) including MMP-1, MMP-2, MMP-3, MMP-7, MMP-9, MMP-13, MMP-14 and MMP-15. Additionally, modulates the processing of amyloid precursor protein (APP) and apolipoprotein E receptor ApoER2 by inhibiting two alpha-secretases ADAM10 and ADAM17. Functions as a tumor suppressor and a potent inhibitor of angiogenesis. Exerts its anti-angiogenic effect by directly interacting with vascular endothelial growth factor (VEGF) receptor-2/KDR, preventing its binding to the VEGFA ligand. Selectively induces apoptosis in angiogenic endothelial cells through a caspase-independent cell death pathway. Mechanistically, inhibits matrix-induced focal adhesion kinase PTK2 tyrosine phosphorylation and association with paxillin/PXN and disrupts the incorporation of ITGB3, PTK2 and PXN into focal adhesion contacts on the matrix. In Mus musculus (Mouse), this protein is Metalloproteinase inhibitor 3 (Timp3).